Here is a 369-residue protein sequence, read N- to C-terminus: Maltose/maltodextrin import ATP-binding protein MalK (369 aa).

The 231-residue stretch at 4 to 234 (VTLHNVSKAY…PVNRFVASFI (231 aa)) folds into the ABC transporter domain. 36–43 (GPSGCGKS) is an ATP binding site.

The protein belongs to the ABC transporter superfamily. Maltooligosaccharide importer (TC 3.A.1.1.1) family. The complex is composed of two ATP-binding proteins (MalK), two transmembrane proteins (MalG and MalK) and a solute-binding protein (MalE).

It is found in the cell inner membrane. It catalyses the reaction D-maltose(out) + ATP + H2O = D-maltose(in) + ADP + phosphate + H(+). Functionally, part of the ABC transporter complex MalEFGK involved in maltose/maltodextrin import. Responsible for energy coupling to the transport system. In Photorhabdus laumondii subsp. laumondii (strain DSM 15139 / CIP 105565 / TT01) (Photorhabdus luminescens subsp. laumondii), this protein is Maltose/maltodextrin import ATP-binding protein MalK.